The chain runs to 1310 residues: MQHCLEQSDITQYQQYYSSWCDARALGPRLSPVALSLLVGRNEHRLSAEPEVHRSQGRCVGVEVPREDINYLSTTCKPEIKSRNLKEDSEDQGRLPTRLPEIMLVGSQSFSPGGPNGIIRSQSFAGFSGLQERRSRQVLGVSPGITRAPSKDVYCKPGYACRVEFLLCKAFSKQTCNSFIENASALKKPQAKLKKMHNLGHKNTNTPKEPQPKRVEEVYRALKNGLDEYLEFHQTELDKLTAQLKDMKRNSRLGVLYDLDKGVLYDLDKVDELYEAYCIQRRLQDGASKMKQAFATSPASKAARESLSEINRSYKEYTENMCTIEAELESLLGEFSIKMKGLAGFARLCPGDQYESMDGPNPYQRQQGEVYFSLLATRRIGDGSCLSKGARIFMKYGRQRWKLKGKIEVNGKQSWDGEETVFLPLIVGFISIKVTELKGLATHILVGSVTCETKELFAARPQVVAVDINDLGTIKLNLEITWYPFDVEDTTPSSGPGNKTAALQRRMSMYSQGTPETPTFKDQSFFSNLPDDIFESGNAAEEKRPLSLSFSDLQDGDCVFTSSSTTSPSSSHSAHPEITITPAELTHSSLSSQNEGTEDSSSASSRNSLGEDHEPKSHSKSDTVEPKKPSVDARSGTESLFLENSVAEALLQESDEASELKPVELDTFEGNITKQLVKRLTSAEGPITTNKLFFEGSVGSESEAGRSFLDGSLEDAFNGLFLALDPHKEQYKEFQDLNQEVTHLDDVLKCKPAGSRSRSSSLSLTVESALESFDFLNTSDFDEEEEDGDEVCHVGGGADSVFSDTETEKSGSVHPEARGHLSEALTEDTGVGTSVAGSPLPLTTGNESLDITIVKHLQYCTQLVQQIVFSSKTPFVARSLLEKLSRQVLVLQKLAAVSDENLGNITSVVEAIPEFHKKPSLLSFWTKCCSPSGVYHSSAAHLIKQLEASFARNINKDYPGLAEPVFRTLVSQILDRAEPLLCSGLSSEVITVFQYYSFLTSHGVSDLETHLGQLARQVAMVQTLQSLRDEKLLQTMSDLAPSNLPAQQEVLRTLALLLTKDDNEVSEAVTLYLAAASKNEHFREKALLYYCEALTKTNLQLQKAACLALKSLEATESIKMLVTLCQSDTEEIRTVASETLLSLAPYSGSAMTSQIRQNYSTEVEAAVNRLVNLHLRASYTYLSLGFFFDPDDVALEGNERGGRALFQDVQKPSQDEWGKTLEAMEAALALEKNLNQALLDLHALGSARTDPHLCDFLESHFLDKEVKLIKKMGNHLTNLRRVAGPQPAQTGVAQASLGEYLFERLTLKHD.

2 positions are modified to phosphoserine: S123 and S178. The segment at 196–254 is involved in cell filopodia formation; sequence MHNLGHKNTNTPKEPQPKRVEEVYRALKNGLDEYLEFHQTELDKLTAQLKDMKRNSRLG. The stretch at 224 to 253 forms a coiled coil; the sequence is NGLDEYLEFHQTELDKLTAQLKDMKRNSRL. Residue S508 is modified to Phosphoserine. Residues 588–608 show a composition bias toward polar residues; that stretch reads SSLSSQNEGTEDSSSASSRNS. The disordered stretch occupies residues 588–639; sequence SSLSSQNEGTEDSSSASSRNSLGEDHEPKSHSKSDTVEPKKPSVDARSGTES. Residues 609–631 show a composition bias toward basic and acidic residues; it reads LGEDHEPKSHSKSDTVEPKKPSV. Position 682 is a phosphoserine (S682).

The protein belongs to the RIPOR family. As to quaternary structure, homooligomer; homooligomerization is regulated by RHOC and leads to the formation of concatemers through the association of N- and C-termini. Interacts (phosphorylated form) with 14-3-3 proteins; these interactions occur during myogenic cell differentiation and also induces T cell proliferation arrest. Interacts (phosphorylated form) with HDAC6; this interaction occurs during early myogenic differentiation, prevents HDAC6 to deacetylate tubulin and also induces T cell proliferation arrest. Interacts with DYSF; this interaction occurs during early myogenic differentiation. Interacts with MYOF. Interacts (via active GTP- or inactive GDP-bound forms) with RHOA; this interaction is direct, blocks the loading of GTP to RHOA and decreases upon chemokine CCL19 stimulation in primary T lymphocytes. Interacts with RHOC. Interacts (via phosphorylated form) with YWHAB; this interaction occurs in a chemokine-dependent manner and does not compete for binding of RIPOR2 with RHOA nor blocks inhibition of RIPOR2-mediated RHOA activity. Interacts with YWHAE. Interacts with YWHAQ. Post-translationally, phosphorylated. Chemokine-induced phosphorylation in neutrophils occurs in a PKC- and AKT-dependent manner, resulting in RIPOR2 interaction with YWHAB and stabilization. Phosphorylated by PKCA, AKT1 and MAPKAPK1A; in vitro. Expressed in the cochlea (at protein level).

It localises to the cytoplasm. The protein localises to the cytoskeleton. The protein resides in the cell projection. It is found in the filopodium. Its subcellular location is the apical cell membrane. It localises to the stereocilium. The protein localises to the stereocilium membrane. Its function is as follows. Acts as an inhibitor of the small GTPase RHOA and plays several roles in the regulation of myoblast and hair cell differentiation, lymphocyte T proliferation and neutrophil polarization. Plays a role in fetal mononuclear myoblast differentiation by promoting filopodia and myotube formation. Maintains naive T lymphocytes in a quiescent state and prevents chemokine-induced T lymphocyte responses, such as cell adhesion, polarization and migration. Involved also in the regulation of neutrophil polarization, chemotaxis and adhesion. Required for normal development of inner and outer hair cell stereocilia within the cochlea of the inner ear. Plays a role for maintaining the structural organization of the basal domain of stereocilia. Involved in mechanosensory hair cell function. Required for normal hearing. This is Rho family-interacting cell polarization regulator 2 from Rattus norvegicus (Rat).